Here is a 126-residue protein sequence, read N- to C-terminus: Glycine cleavage system H protein (126 aa).

In terms of domain architecture, Lipoyl-binding spans 22–104 (TVTIGITEYA…YEKAWMVKVE (83 aa)). The residue at position 63 (lysine 63) is an N6-lipoyllysine.

This sequence belongs to the GcvH family. The glycine cleavage system is composed of four proteins: P, T, L and H. The cofactor is (R)-lipoate.

The glycine cleavage system catalyzes the degradation of glycine. The H protein shuttles the methylamine group of glycine from the P protein to the T protein. Functionally, is also involved in protein lipoylation via its role as an octanoyl/lipoyl carrier protein intermediate. The chain is Glycine cleavage system H protein from Staphylococcus saprophyticus subsp. saprophyticus (strain ATCC 15305 / DSM 20229 / NCIMB 8711 / NCTC 7292 / S-41).